A 141-amino-acid chain; its full sequence is Hemoglobin subunit alpha-D (141 aa).

Residues 1–141 (MLGAEETALV…VAAVLAEKYR (141 aa)) enclose the Globin domain. Heme b contacts are provided by H58 and H87.

This sequence belongs to the globin family. In terms of assembly, heterotetramer of two alpha-D chains and two beta chains. As to expression, red blood cells.

Its function is as follows. Involved in oxygen transport from the lung to the various peripheral tissues. This is Hemoglobin subunit alpha-D (HBAD) from Phalacrocorax carbo (Great cormorant).